We begin with the raw amino-acid sequence, 229 residues long: MPVFRLSDRLVFPSPHLARHDGLLCLGGDLTPERILLAYQNGIFPWFSPGDPLLWWSPDPRLVILPGQLRVSRSLQKRINRNVYTITMDQAFGRVINACADLRNRSGQGTWLVQEMIEAYIGLHERGYAHSVEAWNAGTLAGGLYGISLGGCFFGESMFSTMADSSKTALAALDRHLVKQKFDLIDCQVKTDHLVSMGGVEIPRKDFLTRIHGSLEKKTIKGPWIFTGF.

The protein belongs to the L/F-transferase family.

It is found in the cytoplasm. It catalyses the reaction N-terminal L-lysyl-[protein] + L-leucyl-tRNA(Leu) = N-terminal L-leucyl-L-lysyl-[protein] + tRNA(Leu) + H(+). It carries out the reaction N-terminal L-arginyl-[protein] + L-leucyl-tRNA(Leu) = N-terminal L-leucyl-L-arginyl-[protein] + tRNA(Leu) + H(+). The catalysed reaction is L-phenylalanyl-tRNA(Phe) + an N-terminal L-alpha-aminoacyl-[protein] = an N-terminal L-phenylalanyl-L-alpha-aminoacyl-[protein] + tRNA(Phe). Its function is as follows. Functions in the N-end rule pathway of protein degradation where it conjugates Leu, Phe and, less efficiently, Met from aminoacyl-tRNAs to the N-termini of proteins containing an N-terminal arginine or lysine. The polypeptide is Leucyl/phenylalanyl-tRNA--protein transferase (Desulforapulum autotrophicum (strain ATCC 43914 / DSM 3382 / VKM B-1955 / HRM2) (Desulfobacterium autotrophicum)).